The following is an 89-amino-acid chain: Ragulator complex protein LAMTOR5 homolog (89 aa).

It belongs to the LAMTOR5 family. In terms of assembly, part of the Ragulator complex.

The protein localises to the cytoplasm. It localises to the lysosome. In terms of biological role, regulator of the TOR pathway, a signaling cascade that promotes cell growth in response to growth factors, energy levels, and amino acids. As part of the Ragulator complex, may activate the TOR signaling cascade in response to amino acids. The polypeptide is Ragulator complex protein LAMTOR5 homolog (Dictyostelium discoideum (Social amoeba)).